We begin with the raw amino-acid sequence, 399 residues long: Glutamine synthetase 1, mitochondrial (399 aa).

The N-terminal 27 residues, 1–27, are a transit peptide targeting the mitochondrion; the sequence is MALRVAGLFLKKELVAPATQQLRLLRT. The GS beta-grasp domain occupies 62 to 143; the sequence is VQATYLWIDG…VLCDTYSADG (82 aa). The 250-residue stretch at 150 to 399 folds into the GS catalytic domain; it reads KRAAFQAAID…AIVRTCLLNE (250 aa).

It belongs to the glutamine synthetase family. In terms of assembly, homooctamer.

Its subcellular location is the mitochondrion. The catalysed reaction is L-glutamate + NH4(+) + ATP = L-glutamine + ADP + phosphate + H(+). This Drosophila melanogaster (Fruit fly) protein is Glutamine synthetase 1, mitochondrial (Gs1).